The chain runs to 209 residues: Large ribosomal subunit protein bL25 (209 aa).

A disordered region spans residues 190–209 (PDASAAPVAAPAAPAKKGKK).

The protein belongs to the bacterial ribosomal protein bL25 family. CTC subfamily. As to quaternary structure, part of the 50S ribosomal subunit; part of the 5S rRNA/L5/L18/L25 subcomplex. Contacts the 5S rRNA. Binds to the 5S rRNA independently of L5 and L18.

This is one of the proteins that binds to the 5S RNA in the ribosome where it forms part of the central protuberance. In Delftia acidovorans (strain DSM 14801 / SPH-1), this protein is Large ribosomal subunit protein bL25.